Reading from the N-terminus, the 248-residue chain is Ribosomal RNA small subunit methyltransferase J (248 aa).

S-adenosyl-L-methionine contacts are provided by residues 98–99, 114–115, 150–151, and Asp-168; these read RD, ER, and SS.

The protein belongs to the methyltransferase superfamily. RsmJ family.

The protein resides in the cytoplasm. It carries out the reaction guanosine(1516) in 16S rRNA + S-adenosyl-L-methionine = N(2)-methylguanosine(1516) in 16S rRNA + S-adenosyl-L-homocysteine + H(+). Functionally, specifically methylates the guanosine in position 1516 of 16S rRNA. The sequence is that of Ribosomal RNA small subunit methyltransferase J from Shewanella amazonensis (strain ATCC BAA-1098 / SB2B).